Reading from the N-terminus, the 212-residue chain is MEKLNFLLKNTALLPTNLQKERLVQLVLLLNKWNKAYNLTSVRDPMEMLVKHILDSIVVSPYLQGNIFIDVGTGPGLPGLPLAIINPDKKFFLLDSLGKRISFIRNAVRELELTNVEPVLSRVEEFKPDHQFDGVLSRAFASLKDMTEWCQHLLTDQGFFYALKGQYNMEEVSALSAQFSVDKIIELNVPELVGKRHLVLLKKIRINLMNYL.

Residues glycine 72, leucine 77, 123–124 (VE), and arginine 138 each bind S-adenosyl-L-methionine.

Belongs to the methyltransferase superfamily. RNA methyltransferase RsmG family.

It localises to the cytoplasm. The enzyme catalyses guanosine(527) in 16S rRNA + S-adenosyl-L-methionine = N(7)-methylguanosine(527) in 16S rRNA + S-adenosyl-L-homocysteine. In terms of biological role, specifically methylates the N7 position of guanine in position 527 of 16S rRNA. This is Ribosomal RNA small subunit methyltransferase G from Histophilus somni (strain 2336) (Haemophilus somnus).